The sequence spans 116 residues: Phosphoribosyl-ATP pyrophosphatase (116 aa).

This sequence belongs to the PRA-PH family.

It is found in the cytoplasm. The catalysed reaction is 1-(5-phospho-beta-D-ribosyl)-ATP + H2O = 1-(5-phospho-beta-D-ribosyl)-5'-AMP + diphosphate + H(+). It participates in amino-acid biosynthesis; L-histidine biosynthesis; L-histidine from 5-phospho-alpha-D-ribose 1-diphosphate: step 2/9. This Bordetella avium (strain 197N) protein is Phosphoribosyl-ATP pyrophosphatase.